The following is a 186-amino-acid chain: Ferritin heavy chain (186 aa).

A Ferritin-like diiron domain is found at 16–165 (QNYHQDSEAA…DHVTNLRKMG (150 aa)). Residues glutamate 33, glutamate 68, histidine 71, glutamate 113, and glutamine 147 each contribute to the Fe cation site. Phosphoserine is present on serine 184.

The protein belongs to the ferritin family. Oligomer of 24 subunits. There are two types of subunits: L (light) chain and H (heavy) chain. The major chain can be light or heavy, depending on the species and tissue type. The functional molecule forms a roughly spherical shell with a diameter of 12 nm and contains a central cavity into which the insoluble mineral iron core is deposited. Interacts with NCOA4; NCOA4 promotes targeting of the iron-binding ferritin complex to autolysosomes following starvation or iron depletion.

Its subcellular location is the cytoplasm. The protein resides in the lysosome. It is found in the cytoplasmic vesicle. The protein localises to the autophagosome. The catalysed reaction is 4 Fe(2+) + O2 + 4 H(+) = 4 Fe(3+) + 2 H2O. In terms of biological role, stores iron in a soluble, non-toxic, readily available form. Important for iron homeostasis. Has ferroxidase activity. Iron is taken up in the ferrous form and deposited as ferric hydroxides after oxidation. Also plays a role in delivery of iron to cells. Mediates iron uptake in capsule cells of the developing kidney. Delivery to lysosomes is mediated by the cargo receptor NCOA4 for autophagic degradation and release of iron. The protein is Ferritin heavy chain (FTH1) of Cricetulus griseus (Chinese hamster).